Reading from the N-terminus, the 1035-residue chain is Isoleucine--tRNA ligase (1035 aa).

Residues 48 to 58 (PTANGRPHVGH) carry the 'HIGH' region motif. The short motif at 589–593 (KMSKH) is the 'KMSKS' region element. K592 is an ATP binding site.

Belongs to the class-I aminoacyl-tRNA synthetase family. IleS type 2 subfamily. In terms of assembly, monomer. Zn(2+) is required as a cofactor.

It localises to the cytoplasm. It carries out the reaction tRNA(Ile) + L-isoleucine + ATP = L-isoleucyl-tRNA(Ile) + AMP + diphosphate. Catalyzes the attachment of isoleucine to tRNA(Ile). As IleRS can inadvertently accommodate and process structurally similar amino acids such as valine, to avoid such errors it has two additional distinct tRNA(Ile)-dependent editing activities. One activity is designated as 'pretransfer' editing and involves the hydrolysis of activated Val-AMP. The other activity is designated 'posttransfer' editing and involves deacylation of mischarged Val-tRNA(Ile). The polypeptide is Isoleucine--tRNA ligase (Clostridium acetobutylicum (strain ATCC 824 / DSM 792 / JCM 1419 / IAM 19013 / LMG 5710 / NBRC 13948 / NRRL B-527 / VKM B-1787 / 2291 / W)).